We begin with the raw amino-acid sequence, 128 residues long: Large ribosomal subunit protein bL17 (128 aa).

This sequence belongs to the bacterial ribosomal protein bL17 family. In terms of assembly, part of the 50S ribosomal subunit. Contacts protein L32.

The polypeptide is Large ribosomal subunit protein bL17 (Streptococcus agalactiae serotype Ia (strain ATCC 27591 / A909 / CDC SS700)).